Consider the following 197-residue polypeptide: ADP-ribosylation factor 1 (197 aa).

G2 carries the N-myristoyl glycine lipid modification. GTP contacts are provided by residues G24–T31, D67–Q71, and N126–D129.

It belongs to the small GTPase superfamily. Arf family.

It localises to the golgi apparatus. It catalyses the reaction GTP + H2O = GDP + phosphate + H(+). In terms of biological role, GTP-binding protein involved in protein trafficking; may modulate vesicle budding and uncoating within the Golgi apparatus. The sequence is that of ADP-ribosylation factor 1 from Solanum tuberosum (Potato).